A 450-amino-acid chain; its full sequence is UDP-N-acetylmuramoylalanine--D-glutamate ligase (450 aa).

Position 119 to 125 (119 to 125 (GSNGKTT)) interacts with ATP.

This sequence belongs to the MurCDEF family.

The protein localises to the cytoplasm. The enzyme catalyses UDP-N-acetyl-alpha-D-muramoyl-L-alanine + D-glutamate + ATP = UDP-N-acetyl-alpha-D-muramoyl-L-alanyl-D-glutamate + ADP + phosphate + H(+). The protein operates within cell wall biogenesis; peptidoglycan biosynthesis. In terms of biological role, cell wall formation. Catalyzes the addition of glutamate to the nucleotide precursor UDP-N-acetylmuramoyl-L-alanine (UMA). The chain is UDP-N-acetylmuramoylalanine--D-glutamate ligase from Streptococcus pneumoniae (strain P1031).